The following is a 391-amino-acid chain: Ferrochelatase (391 aa).

His-196 and Glu-281 together coordinate Fe cation.

This sequence belongs to the ferrochelatase family.

The protein localises to the cytoplasm. It catalyses the reaction heme b + 2 H(+) = protoporphyrin IX + Fe(2+). Its pathway is porphyrin-containing compound metabolism; protoheme biosynthesis; protoheme from protoporphyrin-IX: step 1/1. Its function is as follows. Catalyzes the ferrous insertion into protoporphyrin IX. The sequence is that of Ferrochelatase from Prochlorococcus marinus (strain AS9601).